Consider the following 333-residue polypeptide: Autoinducer 2 import system permease protein LsrD (333 aa).

The next 10 membrane-spanning stretches (helical) occupy residues 7 to 27 (YGWELTLAALLVLEILLFGLS), 45 to 65 (ICIGIVALPLTMVIVSGGIDI), 67 to 87 (FGSTIGLCAIFLGIVFQAGVP), 90 to 110 (VAIPLTVLVGALCGLINAGLI), 118 to 138 (LVITLGTLYLFGGSALLLSGL), 162 to 182 (LFGLPIPLVIFMLCVLLFWLL), 212 to 232 (TLCMLYAMTGVASAIAAILLV), 240 to 260 (SDLGASFLMPAITAVVLGGAN), 261 to 281 (IYGGSGSILGTALAVLLVGYL), and 288 to 308 (IGTPNQISSALSGALLILVVV).

Belongs to the binding-protein-dependent transport system permease family. AraH/RbsC subfamily. In terms of assembly, the complex is composed of two ATP-binding proteins (LsrA), two transmembrane proteins (LsrC and LsrD) and a solute-binding protein (LsrB).

It is found in the cell inner membrane. Functionally, part of the ABC transporter complex LsrABCD involved in autoinducer 2 (AI-2) import. Probably responsible for the translocation of the substrate across the membrane. The protein is Autoinducer 2 import system permease protein LsrD (lsrD) of Yersinia pseudotuberculosis serotype IB (strain PB1/+).